The sequence spans 439 residues: Dihydroorotase (439 aa).

Residues His73 and His75 each contribute to the Zn(2+) site. Substrate-binding positions include 75-77 (HLR) and Asn107. Residues Asp165, His192, and His245 each contribute to the Zn(2+) site. Substrate is bound at residue Asn291. Asp318 contacts Zn(2+). Asp318 is a catalytic residue. A substrate-binding site is contributed by His322.

Belongs to the metallo-dependent hydrolases superfamily. DHOase family. Class I DHOase subfamily. Zn(2+) is required as a cofactor.

The enzyme catalyses (S)-dihydroorotate + H2O = N-carbamoyl-L-aspartate + H(+). It functions in the pathway pyrimidine metabolism; UMP biosynthesis via de novo pathway; (S)-dihydroorotate from bicarbonate: step 3/3. Functionally, catalyzes the reversible cyclization of carbamoyl aspartate to dihydroorotate. This Syntrophobacter fumaroxidans (strain DSM 10017 / MPOB) protein is Dihydroorotase.